Consider the following 453-residue polypeptide: Glutamate--tRNA ligase 2 (453 aa).

A 'HIGH' region motif is present at residues 10-20; that stretch reads PSPTGFLHIGG. The 'KMSKS' region signature appears at 232–236; the sequence is KLSKR. Position 235 (K235) interacts with ATP.

It belongs to the class-I aminoacyl-tRNA synthetase family. Glutamate--tRNA ligase type 1 subfamily. Monomer.

It localises to the cytoplasm. It catalyses the reaction tRNA(Glu) + L-glutamate + ATP = L-glutamyl-tRNA(Glu) + AMP + diphosphate. Functionally, catalyzes the attachment of glutamate to tRNA(Glu) in a two-step reaction: glutamate is first activated by ATP to form Glu-AMP and then transferred to the acceptor end of tRNA(Glu). In Wolbachia sp. subsp. Brugia malayi (strain TRS), this protein is Glutamate--tRNA ligase 2.